The chain runs to 209 residues: MTKGILGRKVGMTQIFTKDGVLVPVTVIEATPNVVMQVKTVENDGYEAVQLGYQDKREVLSNKPEKGHADKAKTSPKRFIRELRGVELSDYEVGSEVTVETFKEGDVVNVTGTSRGHGYQGNIKRHHQSRGPETHGSRYHRIPGSMGSIINRVPKGKKLPGHMGVKTVTIENLVVEKVVADKNVLMIKGNVPGAKNSLIVVKSSAKASK.

The segment at T113–K155 is disordered.

The protein belongs to the universal ribosomal protein uL3 family. In terms of assembly, part of the 50S ribosomal subunit. Forms a cluster with proteins L14 and L19.

One of the primary rRNA binding proteins, it binds directly near the 3'-end of the 23S rRNA, where it nucleates assembly of the 50S subunit. In Lactobacillus delbrueckii subsp. bulgaricus (strain ATCC 11842 / DSM 20081 / BCRC 10696 / JCM 1002 / NBRC 13953 / NCIMB 11778 / NCTC 12712 / WDCM 00102 / Lb 14), this protein is Large ribosomal subunit protein uL3.